Here is a 21-residue protein sequence, read N- to C-terminus: Cold shock protein CspSt (21 aa).

The 21-residue stretch at 1–21 (KNGTVKWFNAEKGFGFITSED) folds into the CSD domain.

It is found in the cytoplasm. This is Cold shock protein CspSt from Streptococcus thermophilus.